The primary structure comprises 462 residues: MSYPPNQGYPPQSNSPQPGQYGAPQQGYPPQQGYPPQQGYPPQQGYPPQQGYPPQQGYPPQQGYPPQQGYPPQQGYPPQQGYPPQQGYPPQQGYPPQQGYPPQQGYPPQQGYPPQQGYPPQGYPPQQGYPPVGVPVGVPVGFAPGMVVGYHQGYFVGTITHDCKHDAEVLRKAMKGIGTNESDLIKVLANRNWAEREQIKREFSAKYSKDLIQDIKSETSGNFEKCLVALLTEPAHFDVEQIHSACAGAGTNENTIIEILVTRSNVQMEYIKQIFKNKHGKSLKDRLESEASGDFKKLLEKLTEPRDESPVINPMQVSKDAEDLYKAGEGKIGTDEKEFIKILTSRSLPHIAAVASEYIKHHKKHSLIKAIDSEFSGSIKTGLIAIVTYALNPYGYFAEILNKSMKGAGTNDNKLIRTVVTQMHNMPQIKTAYSTLFKNSLAHDIQADCSGDFKKLLLDIIS.

Residues 1–130 (MSYPPNQGYP…QGYPPQQGYP (130 aa)) are disordered. Residues 7 to 131 (QGYPPQSNSP…GYPPQQGYPP (125 aa)) are 19 X 6 AA tandem repeats of Q-G-Y-P-P-Q. A compositionally biased stretch (low complexity) spans 16 to 130 (PQPGQYGAPQ…QGYPPQQGYP (115 aa)). Annexin repeat units lie at residues 161–232 (HDCK…ALLT), 233–304 (EPAH…KLTE), 315–388 (MQVS…AIVT), and 392–462 (NPYG…DIIS).

This sequence belongs to the annexin family.

Calcium/phospholipid-binding protein which promotes membrane fusion and is involved in exocytosis. This Dictyostelium discoideum (Social amoeba) protein is Annexin A7 (nxnA).